Reading from the N-terminus, the 292-residue chain is Acetyl-coenzyme A carboxylase carboxyl transferase subunit beta (292 aa).

A CoA carboxyltransferase N-terminal domain is found at 36 to 292 (MWSKCEKCAK…LLRMHEVDYE (257 aa)). Residues cysteine 40, cysteine 43, cysteine 59, and cysteine 62 each contribute to the Zn(2+) site. The segment at 40 to 62 (CEKCAKILYTEDLRENFNVCPNC) adopts a C4-type zinc-finger fold.

The protein belongs to the AccD/PCCB family. In terms of assembly, acetyl-CoA carboxylase is a heterohexamer composed of biotin carboxyl carrier protein (AccB), biotin carboxylase (AccC) and two subunits each of ACCase subunit alpha (AccA) and ACCase subunit beta (AccD). The cofactor is Zn(2+).

The protein localises to the cytoplasm. It carries out the reaction N(6)-carboxybiotinyl-L-lysyl-[protein] + acetyl-CoA = N(6)-biotinyl-L-lysyl-[protein] + malonyl-CoA. The protein operates within lipid metabolism; malonyl-CoA biosynthesis; malonyl-CoA from acetyl-CoA: step 1/1. In terms of biological role, component of the acetyl coenzyme A carboxylase (ACC) complex. Biotin carboxylase (BC) catalyzes the carboxylation of biotin on its carrier protein (BCCP) and then the CO(2) group is transferred by the transcarboxylase to acetyl-CoA to form malonyl-CoA. The sequence is that of Acetyl-coenzyme A carboxylase carboxyl transferase subunit beta from Clostridium perfringens (strain ATCC 13124 / DSM 756 / JCM 1290 / NCIMB 6125 / NCTC 8237 / Type A).